A 566-amino-acid chain; its full sequence is MTTREYDYIICGAGSAGNVLATRLTEDPNVTVLLLEAGGPDYRFDFRTQMPAALAYPLQGRRYNWAYETDPEPHMDNRRMECGRGKGLGGSSLINGMCYIRGNALDYDNWATHQGLENWTYLDCLPYFKKAETRDIGPNDYHGGDGPVSVTTSKPGVNPLFEAMVEAGVQAGYPRTEDLNGYQQEGFGPMDRTVTPKGRRASTARGYLDQAKTRPNLEIVTHALADRILFDGKRASGVTYLRGNERATAHARREVLVCSGAIASPQLLQRSGVGPGAWLKELDIPIVLDLPGVGQNLQDHLEMYIQYECKEPVSLYPALKWWNQPKIGLEWMLNGTGLGASNHFEAGGFIRTRDDDPWPNIQYHFLPVAINYNGSNAIEMHGFQAHVGSMRSPSRGRVKLRSRDPNAHPSILFNYMAEALDWREFRDAIRATREIMRQPALDRYRGRELNPGADLKSDKELDAFVRARAETAFHPSCSCKMGYDDMAVVDNEGRVHGLEGLRVVDASIMPIITTGNLNAPTIMIAEKIADKIRGRKPLERANVPYFVANGAPARNVAKAVRQPETV.

7–36 (DYIICGAGSAGNVLATRLTEDPNVTVLLLE) contacts FAD. The interval 182-204 (YQQEGFGPMDRTVTPKGRRASTA) is disordered. The Proton acceptor role is filled by H474.

Belongs to the GMC oxidoreductase family. FAD serves as cofactor.

It carries out the reaction choline + A = betaine aldehyde + AH2. It catalyses the reaction betaine aldehyde + NAD(+) + H2O = glycine betaine + NADH + 2 H(+). It participates in amine and polyamine biosynthesis; betaine biosynthesis via choline pathway; betaine aldehyde from choline (cytochrome c reductase route): step 1/1. Its function is as follows. Involved in the biosynthesis of the osmoprotectant glycine betaine. Catalyzes the oxidation of choline to betaine aldehyde and betaine aldehyde to glycine betaine at the same rate. This chain is Oxygen-dependent choline dehydrogenase, found in Burkholderia multivorans (strain ATCC 17616 / 249).